The chain runs to 729 residues: Solute carrier family 15 member 2 (729 aa).

The segment at 1–34 (MNPFQQNESKETLFSPVSTEETPPRLSSPAKKTP) is disordered. The Cytoplasmic portion of the chain corresponds to 1–57 (MNPFQQNESKETLFSPVSTEETPPRLSSPAKKTPPKICGSNYPLSIAFIVVNEFCER). Phosphoserine is present on Ser-9. At Thr-12 the chain carries Phosphothreonine. Residue Ser-28 is modified to Phosphoserine. Residues 58-78 (FSYYGMKAVLTLYFLYFLHWN) form a helical membrane-spanning segment. The Extracellular segment spans residues 79 to 87 (EDTSTSVYH). A helical membrane pass occupies residues 88–108 (AFSSLCYFTPILGAAIADSWL). Residues 109–113 (GKFKT) are Cytoplasmic-facing. Residues 114 to 134 (IIYLSLVNVLGHVIKSLSAFP) traverse the membrane as a helical segment. The Extracellular segment spans residues 135–139 (ILGGK). Residues 140–160 (VVHTVLSLVGLCLIALGTGGI) traverse the membrane as a helical segment. Residues 161-183 (KPCVAAFGGDQFEEKHAEERTRY) are Cytoplasmic-facing. A helical membrane pass occupies residues 184-204 (FSGFYLAINAGSLISTFITPM). Residues 205-217 (LRGDVQCFGEDCY) lie on the Extracellular side of the membrane. The helical transmembrane segment at 218–238 (ALAFGVPGLLMVIALVVFAMG) threads the bilayer. Residues 239–295 (SKMYKKPPPEGNIVAQVVKCIWFAISNRFKNRSEDIPKRQHWLDWAAEKYPKQLIMD) are Cytoplasmic-facing. Residues 296-316 (VKTLTRVLFLYIPLPMFWALL) form a helical membrane-spanning segment. Over 317–343 (DQQGSRWTLQATKMNGNLGFFVLQPDQ) the chain is Extracellular. Residues 344 to 364 (MQVLNPLLVLIFIPLFDLVIY) traverse the membrane as a helical segment. At 365 to 380 (RLISKCGINFTSLRKM) the chain is on the cytoplasmic side. A helical membrane pass occupies residues 381 to 401 (AVGMVLACLAFAAAATVEIKI). The Extracellular segment spans residues 402 to 611 (NEMAPPQPGS…PANKVSIAWQ (210 aa)). Residues 402–611 (NEMAPPQPGS…PANKVSIAWQ (210 aa)) form an extracellular domain (ECD) region. Residues Asn-435, Asn-472, Asn-508, Asn-528, and Asn-587 are each glycosylated (N-linked (GlcNAc...) asparagine). A helical transmembrane segment spans residues 612–632 (LPQYALVTAGEVMFSVTGLEF). Residues 633–643 (SYSQAPSSMKS) lie on the Cytoplasmic side of the membrane. Residues 644–664 (VLQAAWLLTVAIGNIIVLVVA) form a helical membrane-spanning segment. At 665–674 (QFSGLVQWAE) the chain is on the extracellular side. Residues 675–695 (FVLFSCLLLVVCLIFSIMGYY) traverse the membrane as a helical segment. The Cytoplasmic portion of the chain corresponds to 696–729 (YIPIKSEDIQGPEDKQIPHMQGNMINLETKKTKL).

This sequence belongs to the major facilitator superfamily. Proton-dependent oligopeptide transporter (POT/PTR) (TC 2.A.17) family. Interacts (via extracellular domain region) with trypsin. Strongly expressed in kidney. Also detected in brain, lung, liver and heart.

It is found in the apical cell membrane. The protein localises to the cytoplasmic vesicle. The protein resides in the phagosome membrane. Its subcellular location is the cell membrane. It catalyses the reaction a dipeptide(out) + 2 H(+)(out) = a dipeptide(in) + 2 H(+)(in). The catalysed reaction is N-acetyl-D-muramoyl-L-alanyl-D-isoglutamine(out) + 3 H(+)(out) = N-acetyl-D-muramoyl-L-alanyl-D-isoglutamine(in) + 3 H(+)(in). The enzyme catalyses glycyl-L-leucine(out) + 2 H(+)(out) = glycyl-L-leucine(in) + 2 H(+)(in). It carries out the reaction glycyl-L-lysine(out) + 2 H(+)(out) = glycyl-L-lysine(in) + 2 H(+)(in). It catalyses the reaction glycyl-L-glutamate(out) + 3 H(+)(out) = glycyl-L-glutamate(in) + 3 H(+)(in). The catalysed reaction is L-alanyl-L-alanine(out) + 2 H(+)(out) = L-alanyl-L-alanine(in) + 2 H(+)(in). The enzyme catalyses an L-amino acid tripeptide(out) + 2 H(+)(out) = an L-amino acid tripeptide(in) + 2 H(+)(in). It carries out the reaction carnosine(out) + 2 H(+)(out) = carnosine(in) + 2 H(+)(in). In terms of biological role, proton-coupled amino-acid transporter that transports oligopeptides of 2 to 4 amino acids with a preference for dipeptides. Transports neutral and anionic dipeptides with a proton to peptide stoichiometry of 2:1 or 3:1. In kidney, involved in the absorption of circulating di- and tripeptides from the glomerular filtrate. Can also transport beta-lactam antibiotics, such as the aminocephalosporin cefadroxil, and other antiviral and anticancer drugs. Transports the dipeptide-like aminopeptidase inhibitor bestatin. Also able to transport carnosine. Involved in innate immunity by promoting the detection of microbial pathogens by NOD-like receptors (NLRs). Mediates transport of bacterial peptidoglycans across the plasma membrane or, in macrophages, the phagosome membrane: catalyzes the transport of certain bacterial peptidoglycans, such as muramyl dipeptide (MDP), the NOD2 ligand. The sequence is that of Solute carrier family 15 member 2 from Oryctolagus cuniculus (Rabbit).